We begin with the raw amino-acid sequence, 397 residues long: S-adenosylmethionine synthase (397 aa).

His17 is an ATP binding site. Residue Asp19 coordinates Mg(2+). K(+) is bound at residue Glu45. The L-methionine site is built by Glu58 and Gln101. The flexible loop stretch occupies residues 101–111; that stretch reads QSPDIAQGVDK. Residues 176-178, 243-244, Asp252, 258-259, and Lys279 contribute to the ATP site; these read DGK, RF, and RK. Asp252 contributes to the L-methionine binding site. Position 283 (Lys283) interacts with L-methionine.

This sequence belongs to the AdoMet synthase family. As to quaternary structure, homotetramer; dimer of dimers. It depends on Mg(2+) as a cofactor. Requires K(+) as cofactor.

It localises to the cytoplasm. It catalyses the reaction L-methionine + ATP + H2O = S-adenosyl-L-methionine + phosphate + diphosphate. It participates in amino-acid biosynthesis; S-adenosyl-L-methionine biosynthesis; S-adenosyl-L-methionine from L-methionine: step 1/1. Its function is as follows. Catalyzes the formation of S-adenosylmethionine (AdoMet) from methionine and ATP. The overall synthetic reaction is composed of two sequential steps, AdoMet formation and the subsequent tripolyphosphate hydrolysis which occurs prior to release of AdoMet from the enzyme. This is S-adenosylmethionine synthase from Staphylococcus aureus (strain USA300).